A 206-amino-acid chain; its full sequence is dITP/XTP pyrophosphatase (206 aa).

Substrate is bound at residue 7 to 12 (TSNKDK). Residue D74 is the Proton acceptor of the active site. D74 contributes to the Mg(2+) binding site. Substrate-binding positions include S75, 159–162 (FGYD), K182, and 187–188 (HR).

The protein belongs to the HAM1 NTPase family. As to quaternary structure, homodimer. Requires Mg(2+) as cofactor.

The enzyme catalyses XTP + H2O = XMP + diphosphate + H(+). It carries out the reaction dITP + H2O = dIMP + diphosphate + H(+). It catalyses the reaction ITP + H2O = IMP + diphosphate + H(+). Pyrophosphatase that catalyzes the hydrolysis of nucleoside triphosphates to their monophosphate derivatives, with a high preference for the non-canonical purine nucleotides XTP (xanthosine triphosphate), dITP (deoxyinosine triphosphate) and ITP. Seems to function as a house-cleaning enzyme that removes non-canonical purine nucleotides from the nucleotide pool, thus preventing their incorporation into DNA/RNA and avoiding chromosomal lesions. This Campylobacter hominis (strain ATCC BAA-381 / DSM 21671 / CCUG 45161 / LMG 19568 / NCTC 13146 / CH001A) protein is dITP/XTP pyrophosphatase.